The sequence spans 65 residues: MQASGLILVALFSAVVSYLALLHLSSSSSSCVVVVTGESFRISGCDFTEEFIGFAKTLRVANSQP.

Over 1–3 (MQA) the chain is Lumenal. A helical transmembrane segment spans residues 4–24 (SGLILVALFSAVVSYLALLHL). The Cytoplasmic segment spans residues 25–65 (SSSSSSCVVVVTGESFRISGCDFTEEFIGFAKTLRVANSQP).

It belongs to the Tymovirales TGBp3 protein family.

It is found in the host endoplasmic reticulum membrane. Its function is as follows. Plays a role in viral cell-to-cell propagation, by facilitating genome transport to neighboring plant cells through plasmosdesmata. May induce the formation of granular vesicles derived from the Endoplasmic reticulum, which align on actin filaments. The chain is Movement protein TGBp3 from Carnation latent virus (CLV).